A 358-amino-acid polypeptide reads, in one-letter code: Triacylglycerol lipase (358 aa).

Positions 1–39 (MVRSMRSRVAARAVAWALAVMPLAGAAGLTMAASPAAVA) are cleaved as a signal peptide. One can recognise an AB hydrolase-1 domain in the interval 48–327 (YPVILVHGLA…TSYHWNHLDE (280 aa)). Residue L56 participates in substrate binding. Catalysis depends on S126, which acts as the Nucleophile. Residue Q127 coordinates substrate. A disulfide bridge links C229 with C308. Position 280 (D280) interacts with Ca(2+). Catalysis depends on charge relay system residues D302 and H324. Ca(2+)-binding residues include D326, Q330, and V334.

It belongs to the AB hydrolase superfamily. Pseudomonas lipase family. In terms of assembly, monomer. Interacts with lipase-specific foldase Lif. It depends on Ca(2+) as a cofactor.

The protein localises to the secreted. It carries out the reaction a triacylglycerol + H2O = a diacylglycerol + a fatty acid + H(+). Functionally, catalyzes the hydrolysis of triacylglycerol. The sequence is that of Triacylglycerol lipase from Burkholderia plantarii.